The sequence spans 228 residues: MVIFGLSRAIRKAKKNPIIAEIKVYSPKYGDLLRGRDPLRILRAYEEAGAVGISYITDQKYFKGSFDFLKVLCKETTLPVLRKDFITSKEEIEKTAEVGASAVLLITRILKDKLPEFVDYAKEHGLDTLVEVHTEDELKLAIKTNSTMIGINNRDIGKLEMDDGDVSLTEILAPKIPGKFVKVSESGIATLEDLKRALRVADAALIGTALMKAENPAELLKKFVEAEI.

This sequence belongs to the TrpC family.

The catalysed reaction is 1-(2-carboxyphenylamino)-1-deoxy-D-ribulose 5-phosphate + H(+) = (1S,2R)-1-C-(indol-3-yl)glycerol 3-phosphate + CO2 + H2O. It participates in amino-acid biosynthesis; L-tryptophan biosynthesis; L-tryptophan from chorismate: step 4/5. The polypeptide is Indole-3-glycerol phosphate synthase (Pyrococcus furiosus (strain ATCC 43587 / DSM 3638 / JCM 8422 / Vc1)).